Consider the following 166-residue polypeptide: NAD(P)H-quinone oxidoreductase subunit I, chloroplastic (166 aa).

4Fe-4S ferredoxin-type domains are found at residues 55–84 (GRIHFEFDKCIACEVCVRVCPIDLPVVDWK) and 95–124 (LNYSIDFGICIFCGNCVEYCPTNCLSMTEE). The [4Fe-4S] cluster site is built by Cys64, Cys67, Cys70, Cys74, Cys104, Cys107, Cys110, and Cys114.

This sequence belongs to the complex I 23 kDa subunit family. In terms of assembly, NDH is composed of at least 16 different subunits, 5 of which are encoded in the nucleus. It depends on [4Fe-4S] cluster as a cofactor.

The protein localises to the plastid. Its subcellular location is the chloroplast thylakoid membrane. It catalyses the reaction a plastoquinone + NADH + (n+1) H(+)(in) = a plastoquinol + NAD(+) + n H(+)(out). It carries out the reaction a plastoquinone + NADPH + (n+1) H(+)(in) = a plastoquinol + NADP(+) + n H(+)(out). NDH shuttles electrons from NAD(P)H:plastoquinone, via FMN and iron-sulfur (Fe-S) centers, to quinones in the photosynthetic chain and possibly in a chloroplast respiratory chain. The immediate electron acceptor for the enzyme in this species is believed to be plastoquinone. Couples the redox reaction to proton translocation, and thus conserves the redox energy in a proton gradient. This is NAD(P)H-quinone oxidoreductase subunit I, chloroplastic from Hulsea algida (Pacific hulsea).